A 414-amino-acid polypeptide reads, in one-letter code: Snake venom metalloproteinase atrolysin-D (414 aa).

The N-terminal stretch at M1–S20 is a signal peptide. A propeptide spanning residues I21–D190 is cleaved from the precursor. Residue Q191 is modified to Pyrrolidone carboxylic acid. The Peptidase M12B domain occupies R197–P393. Residues E200 and D284 each coordinate Ca(2+). 2 cysteine pairs are disulfide-bonded: C308–C388 and C348–C355. H333 contributes to the Zn(2+) binding site. E334 is a catalytic residue. Residues H337 and H343 each contribute to the Zn(2+) site. C388 and N391 together coordinate Ca(2+). Positions L394 to E414 are excised as a propeptide.

This sequence belongs to the venom metalloproteinase (M12B) family. P-I subfamily. Monomer. Zn(2+) is required as a cofactor. In terms of processing, the N-terminus is blocked. As to expression, expressed by the venom gland.

It is found in the secreted. The catalysed reaction is Cleavage of 5-His-|-Leu-6, 10-His-|-Leu-11, 14-Ala-|-Leu-15, 16-Tyr-|-Leu-17 and 23-Gly-|-Phe-24 of insulin B chain. With small molecule substrates prefers hydrophobic residue at P2' and small residue such as Ala, Gly at P1.. Functionally, snake venom zinc metalloproteinase that causes hemorrhage by provoking the degradation of the sub-endothelial matrix proteins (fibronectin, laminin, type IV collagen, nidogen, and gelatins). This is Snake venom metalloproteinase atrolysin-D from Crotalus atrox (Western diamondback rattlesnake).